Reading from the N-terminus, the 181-residue chain is Major urinary protein 20 (181 aa).

The signal sequence occupies residues 1 to 19 (MKLLVLLLCLGLTLVCVHA). A disulfide bridge links Cys-83 with Cys-176.

The protein belongs to the calycin superfamily. Lipocalin family. Detected in urine of males but absent from female urine (at protein level).

The protein resides in the secreted. Its function is as follows. Male pheromone which stimulates female sexual attraction to male urinary scent and promotes a strong learned attraction to the airborne urinary odor of an individual male. Promotes spatial learning by rapidly conditioning preference for its remembered location among females and competitor males so that animals prefer to spend time in the site even when scent is absent. In addition to promoting a rapid attraction response, also elicits ultrasonic vocalizations and urinary scent marking in females which do not occur immediately after exposure. Stimulates hippocampal neurogenesis and cell proliferation in the subventricular zone in females. Promotes male aggressive behavior. Response to Mup20 is mediated by a neural circuit extending from the accessory olfactory bulb to a subset of nitric oxidase synthase-expressing neurons in the medial amygdala. As well as acting as a pheromone itself, binds most of the male pheromone, 2-sec-butyl-4,5-dihydrothiazole, in urine and is responsible for its slow release from scent marks. The polypeptide is Major urinary protein 20 (Mus musculus (Mouse)).